We begin with the raw amino-acid sequence, 366 residues long: GTP cyclohydrolase 1 type 2 homolog (366 aa).

Residues His64, His65, Asp102, His326, and Glu329 each contribute to the a divalent metal cation site.

This sequence belongs to the GTP cyclohydrolase I type 2/NIF3 family. As to quaternary structure, homohexamer.

The protein is GTP cyclohydrolase 1 type 2 homolog of Staphylococcus epidermidis (strain ATCC 12228 / FDA PCI 1200).